Consider the following 128-residue polypeptide: Fluoride-specific ion channel FluC (128 aa).

4 helical membrane-spanning segments follow: residues 5–25, 34–54, 67–87, and 99–119; these read LFIS…GLLF, FGTL…LGLF, FLIT…SEVV, and FCVL…GIWI. Residues glycine 74 and threonine 77 each coordinate Na(+).

This sequence belongs to the fluoride channel Fluc/FEX (TC 1.A.43) family.

The protein localises to the cell inner membrane. It catalyses the reaction fluoride(in) = fluoride(out). Na(+) is not transported, but it plays an essential structural role and its presence is essential for fluoride channel function. Its function is as follows. Fluoride-specific ion channel. Important for reducing fluoride concentration in the cell, thus reducing its toxicity. The chain is Fluoride-specific ion channel FluC from Haemophilus influenzae (strain PittGG).